Consider the following 368-residue polypeptide: UPF0284 protein PCC8801_3324 (368 aa).

Belongs to the UPF0284 family.

In Rippkaea orientalis (strain PCC 8801 / RF-1) (Cyanothece sp. (strain PCC 8801)), this protein is UPF0284 protein PCC8801_3324.